A 623-amino-acid chain; its full sequence is Chaperone protein HtpG (623 aa).

Residues 1–341 are a; substrate-binding; it reads MEKREFKAES…SQDLSLNISR (341 aa). The tract at residues 342–549 is b; sequence EMLQHDRQLS…EGEVSIEMEK (208 aa). The tract at residues 550–623 is c; it reads ILSAMPNNQG…FTNDICKLMK (74 aa).

Belongs to the heat shock protein 90 family. In terms of assembly, homodimer.

Its subcellular location is the cytoplasm. Functionally, molecular chaperone. Has ATPase activity. This is Chaperone protein HtpG from Clostridium perfringens (strain 13 / Type A).